Reading from the N-terminus, the 300-residue chain is GTPase Era (300 aa).

In terms of domain architecture, Era-type G spans 4 to 172; sequence KSGFVALAGK…LEKIKEELPE (169 aa). The segment at 12–19 is G1; that stretch reads GKPNVGKS. 12–19 is a binding site for GTP; it reads GKPNVGKS. A G2 region spans residues 38–42; that stretch reads QTTRN. The tract at residues 59–62 is G3; that stretch reads DTPG. GTP is bound by residues 59–63 and 121–124; these read DTPGI and NKID. The G4 stretch occupies residues 121-124; that stretch reads NKID. The interval 151–153 is G5; sequence ISA. Positions 195–280 constitute a KH type-2 domain; it reads IREKIFHLTR…YLDLNVKVKE (86 aa).

The protein belongs to the TRAFAC class TrmE-Era-EngA-EngB-Septin-like GTPase superfamily. Era GTPase family. In terms of assembly, monomer.

The protein localises to the cytoplasm. Its subcellular location is the cell inner membrane. Its function is as follows. An essential GTPase that binds both GDP and GTP, with rapid nucleotide exchange. Plays a role in 16S rRNA processing and 30S ribosomal subunit biogenesis and possibly also in cell cycle regulation and energy metabolism. This Thermotoga maritima (strain ATCC 43589 / DSM 3109 / JCM 10099 / NBRC 100826 / MSB8) protein is GTPase Era.